Reading from the N-terminus, the 1412-residue chain is Cardiac-enriched FHL2-interacting protein (1412 aa).

Disordered stretches follow at residues Val-106–Ala-177, Val-202–Pro-443, Leu-460–Pro-500, Tyr-517–His-848, Ser-877–Thr-923, Glu-935–Thr-1255, and Arg-1344–Ser-1412. A Phosphothreonine modification is found at Thr-120. Residues Ser-135–Ser-145 are compositionally biased toward low complexity. A compositionally biased stretch (pro residues) spans Arg-161 to Lys-171. The span at Val-202–Ser-212 shows a compositional bias: polar residues. Composition is skewed to basic and acidic residues over residues Trp-285 to Ala-299 and Lys-306 to Leu-316. Ser-328 bears the Phosphoserine mark. A compositionally biased stretch (polar residues) spans Ser-343–Gly-352. Basic residues predominate over residues Lys-378 to Thr-389. Ser-473 bears the Phosphoserine mark. 2 stretches are compositionally biased toward basic and acidic residues: residues Gln-482–Lys-496 and Gly-525–Gln-538. The segment covering Ser-587–Asn-612 has biased composition (low complexity). Residues Gly-632–Pro-641 show a composition bias toward basic and acidic residues. Composition is skewed to polar residues over residues Asn-670–Glu-679, Gly-687–Phe-697, and Ser-712–Arg-722. The span at Phe-728 to Glu-741 shows a compositional bias: low complexity. Positions Gln-753–Arg-799 are enriched in basic and acidic residues. Position 813 is a phosphoserine (Ser-813). A compositionally biased stretch (basic and acidic residues) spans Ala-826 to Asp-837. Polar residues-rich tracts occupy residues Ala-904–Pro-921, Gln-943–Gly-953, and Ala-1047–Ala-1066. The segment covering Arg-1164–Lys-1175 has biased composition (basic residues). Residues Ser-1176–Pro-1203 are compositionally biased toward basic and acidic residues. The segment covering Asp-1401–Ser-1412 has biased composition (acidic residues).

Interacts with FHL2. As to expression, expressed in the heart and skeletal muscle (at protein level).

The protein localises to the cytoplasm. Its subcellular location is the myofibril. It is found in the sarcomere. The protein resides in the z line. Functionally, plays an important role in cardiomyocyte hypertrophy via activation of the calcineurin/NFAT signaling pathway. This Mus musculus (Mouse) protein is Cardiac-enriched FHL2-interacting protein.